Reading from the N-terminus, the 207-residue chain is Claudin-11 (207 aa).

M1 is a topological domain (cytoplasmic). The helical transmembrane segment at 2–22 threads the bilayer; that stretch reads VATCLQVVGFVTSFVGWIGVI. The Extracellular portion of the chain corresponds to 23–82; it reads VTTSTNDWVVTCGYTIPTCRKLDELGSKGLWADCVMATGLYHCKPLVDILILPGYVQACR. A helical transmembrane segment spans residues 83-103; sequence ALMIAASVLGLPAILLLLTVL. The Cytoplasmic segment spans residues 104–122; the sequence is PCIRMGHEPGVAKYRRAQL. A helical membrane pass occupies residues 123-143; sequence AGVLLILLALCAIVATIWFPV. Residues 144-157 are Extracellular-facing; sequence CAHRETTIVSFGYS. A helical membrane pass occupies residues 158-178; sequence LYAGWIGAVLCLVGGCVILCC. The Cytoplasmic segment spans residues 179–207; it reads AGDAQAFGENRFYYSSGSSSPTHAKSAHV. 4 positions are modified to phosphoserine: S193, S194, S197, and S198.

This sequence belongs to the claudin family. Interacts with tetraspanin-3/TSPAN3. Interacts with OCLN.

The protein localises to the cell junction. It is found in the tight junction. It localises to the cell membrane. Its function is as follows. Plays a major role in tight junction-specific obliteration of the intercellular space, through calcium-independent cell-adhesion activity. This is Claudin-11 (CLDN11) from Macaca fascicularis (Crab-eating macaque).